The sequence spans 1499 residues: DNA-directed RNA polymerase subunit beta' (1499 aa).

The Zn(2+) site is built by Cys-67, Cys-69, Cys-82, and Cys-85. 3 residues coordinate Mg(2+): Asp-497, Asp-499, and Asp-501. Residues Cys-865, Cys-940, Cys-947, and Cys-950 each contribute to the Zn(2+) site. The segment at 1475 to 1499 (YEPSQRAYQEDEYAKKEDGEIAIDD) is disordered. The span at 1482–1493 (YQEDEYAKKEDG) shows a compositional bias: basic and acidic residues.

This sequence belongs to the RNA polymerase beta' chain family. As to quaternary structure, the RNAP catalytic core consists of 2 alpha, 1 beta, 1 beta' and 1 omega subunit. When a sigma factor is associated with the core the holoenzyme is formed, which can initiate transcription. The cofactor is Mg(2+). Zn(2+) serves as cofactor.

The catalysed reaction is RNA(n) + a ribonucleoside 5'-triphosphate = RNA(n+1) + diphosphate. Its function is as follows. DNA-dependent RNA polymerase catalyzes the transcription of DNA into RNA using the four ribonucleoside triphosphates as substrates. This Chloroherpeton thalassium (strain ATCC 35110 / GB-78) protein is DNA-directed RNA polymerase subunit beta'.